The sequence spans 232 residues: RNA chaperone ProQ (232 aa).

Residues Glu105 to Asp182 form a disordered region. Residues Gln117 to Arg136 show a composition bias toward basic and acidic residues. Positions Arg137–Pro146 are enriched in basic residues. Residues Arg147–His177 are compositionally biased toward basic and acidic residues.

This sequence belongs to the ProQ family.

It is found in the cytoplasm. Functionally, RNA chaperone with significant RNA binding, RNA strand exchange and RNA duplexing activities. May regulate ProP activity through an RNA-based, post-transcriptional mechanism. The sequence is that of RNA chaperone ProQ from Shigella boydii serotype 18 (strain CDC 3083-94 / BS512).